Here is a 456-residue protein sequence, read N- to C-terminus: MSSQIKQVFARQILDSRGNPTIEVEVVLESGAFGRAAVPSGASTGIREALELRDGNKALFLGKSVYKAVENVNTKIAQAVKGLDALDQRLIDKTMIELDGSENKKNLGANAILGVSLATARAAASHLRKPFYRYLMDVKEYLMPVPMMNVINGGSHADNNVDMQEFMIVPAGFDTFSEALRCGTEVFHILKKVLIADGYSVAGVGDEGGYAPDLPSNEAAIEAILKAVKEAGYEPGKHVFIALDPASSEFYKDGKYELKSENKSLTSEEMIDYYAAWVEKYPIVSIEDGLAEEDWAGWKLLTEKLGNKVQLVGDDLFVTNPSILAKGIEKGIANSILIKLNQIGTLTETFEAMAMAGQAGYTCVVSHRSGETSDTIIADLAVATCSGQIKTGSLSRSDRIAKYNQLLRIEEELGENAIYPGIKAFVFNSDEEVEEVVQEIIVEDSEAEKVVVQVEE.

Q164 is a binding site for (2R)-2-phosphoglycerate. E207 (proton donor) is an active-site residue. Mg(2+) contacts are provided by D244, E287, and D314. (2R)-2-phosphoglycerate contacts are provided by K339, R368, S369, and K390. K339 functions as the Proton acceptor in the catalytic mechanism.

It belongs to the enolase family. Component of the RNA degradosome, a multiprotein complex involved in RNA processing and mRNA degradation. Mg(2+) is required as a cofactor.

It is found in the cytoplasm. Its subcellular location is the secreted. The protein resides in the cell surface. The catalysed reaction is (2R)-2-phosphoglycerate = phosphoenolpyruvate + H2O. The protein operates within carbohydrate degradation; glycolysis; pyruvate from D-glyceraldehyde 3-phosphate: step 4/5. In terms of biological role, catalyzes the reversible conversion of 2-phosphoglycerate (2-PG) into phosphoenolpyruvate (PEP). It is essential for the degradation of carbohydrates via glycolysis. This chain is Enolase, found in Francisella tularensis subsp. tularensis (strain FSC 198).